Consider the following 327-residue polypeptide: Zinc transport protein ZntB (327 aa).

The Cytoplasmic segment spans residues M1–M273. Residues A274–I294 form a helical membrane-spanning segment. The Periplasmic segment spans residues P295 to R300. The helical transmembrane segment at F301 to L321 threads the bilayer. The Cytoplasmic segment spans residues H322–L327.

This sequence belongs to the CorA metal ion transporter (MIT) (TC 1.A.35) family.

It localises to the cell inner membrane. The catalysed reaction is Zn(2+)(out) + H(+)(out) = Zn(2+)(in) + H(+)(in). Its function is as follows. Zinc transporter. Acts as a Zn(2+):proton symporter, which likely mediates zinc ion uptake. The polypeptide is Zinc transport protein ZntB (Escherichia fergusonii (strain ATCC 35469 / DSM 13698 / CCUG 18766 / IAM 14443 / JCM 21226 / LMG 7866 / NBRC 102419 / NCTC 12128 / CDC 0568-73)).